A 333-amino-acid polypeptide reads, in one-letter code: MSEYQSIGVIGAGAWGTALAQTAAKAGRDVTLWSFENDVAEAVNTKHENTIYLPDVALSTAIVATTSISDLDACDAILAVAPAQHLRRVLEGFLPYARPGLPIVLCAKGIEQSSLSMMTQVLKETIPAALPAVLSGPSFAIDTAQGLPTAVTLACADETVGNALIEALGTSRFRPYLATDLIGAEIGGAVKNVLAIGCGISEGKGLGKSAHAALISRGFAEMTRLALALGAQRETLAGLCGLGDLVLTCSSPQSRNMSCGLALGRGVSLDDIMSGRRAVTEGVASAPAVVELARRHGVEMPICEAVNEILAGRASVDDAIETLLARPFTLETA.

The NADPH site is built by Trp-15 and Lys-108. The sn-glycerol 3-phosphate site is built by Lys-108, Gly-136, and Ser-138. Position 140 (Ala-140) interacts with NADPH. Sn-glycerol 3-phosphate is bound by residues Lys-191, Asp-244, Ser-254, Arg-255, and Asn-256. The active-site Proton acceptor is the Lys-191. Residue Arg-255 participates in NADPH binding. NADPH is bound by residues Val-279 and Glu-281.

It belongs to the NAD-dependent glycerol-3-phosphate dehydrogenase family.

The protein localises to the cytoplasm. It catalyses the reaction sn-glycerol 3-phosphate + NAD(+) = dihydroxyacetone phosphate + NADH + H(+). It carries out the reaction sn-glycerol 3-phosphate + NADP(+) = dihydroxyacetone phosphate + NADPH + H(+). It functions in the pathway membrane lipid metabolism; glycerophospholipid metabolism. Catalyzes the reduction of the glycolytic intermediate dihydroxyacetone phosphate (DHAP) to sn-glycerol 3-phosphate (G3P), the key precursor for phospholipid synthesis. This is Glycerol-3-phosphate dehydrogenase [NAD(P)+] from Maricaulis maris (strain MCS10) (Caulobacter maris).